The primary structure comprises 453 residues: Zinc finger and BTB domain-containing protein 44 (453 aa).

Lys-4 is covalently cross-linked (Glycyl lysine isopeptide (Lys-Gly) (interchain with G-Cter in SUMO2)). The BTB domain maps to 31-98 (CDITIRVQDK…AYTATLSINT (68 aa)). At Ser-135 the chain carries Phosphoserine. Residues 135 to 157 (SQPEKSLDAGQENSSNCNFTSRD) form a disordered region. The segment covering 145–157 (QENSSNCNFTSRD) has biased composition (polar residues). Ser-159, Ser-161, Ser-165, Ser-191, Ser-194, and Ser-199 each carry phosphoserine. Phosphothreonine is present on Thr-200. The tract at residues 241–266 (QPEKAKQAENTRTLELPGPSEAGRRV) is disordered. A Glycyl lysine isopeptide (Lys-Gly) (interchain with G-Cter in SUMO2) cross-link involves residue Lys-290. Disordered stretches follow at residues 295-324 (SDEEVHEEVSQPVSASQSSLSDQQTVPGSE) and 336-366 (SSSIGSVDEGVTEGLPTLQSTSSTNAHADDD). Residues 304–318 (SQPVSASQSSLSDQQ) are compositionally biased toward low complexity. Over residues 352-361 (TLQSTSSTNA) the composition is skewed to polar residues. 2 C2H2-type zinc fingers span residues 399 to 421 (FQCPTCGVRFTRIQNLKQHMLIH) and 427 to 449 (FQCDCCGKKFTRAYSLKMHRLKH).

It is found in the nucleus. This Mus musculus (Mouse) protein is Zinc finger and BTB domain-containing protein 44 (Zbtb44).